We begin with the raw amino-acid sequence, 266 residues long: 2-hydroxyisocaproyl-CoA dehydratase activator (266 aa).

ATP contacts are provided by residues 10-14 (STASK) and 102-104 (GQD). Cysteine 125 is a binding site for [4Fe-4S] cluster. An ATP-binding site is contributed by aspartate 134. Cysteine 164 serves as a coordination point for [4Fe-4S] cluster. Positions 215 and 241 each coordinate ATP.

It belongs to the HadI activator family. Homodimer. It depends on [4Fe-4S] cluster as a cofactor.

In terms of biological role, involved in the reductive branch of L-leucine fermentation. Required for the activation of (R)-2-hydroxyisocaproyl-CoA dehydratase. The reduced activator transfers one electron to the dehydratase concomitant with hydrolysis of ATP. This protein is extremely sensitive towards oxygen. The protein is 2-hydroxyisocaproyl-CoA dehydratase activator of Clostridioides difficile (Peptoclostridium difficile).